The following is a 272-amino-acid chain: Homeobox protein SIX3 (272 aa).

A DNA-binding region (homeobox) is located at residues 169-228 (GEQKTHCFKERTRGLLREWYLQDPYPNPGKKRELAHATGLTPTQVGNWFKNRRQRDRAAA). Positions 244–272 (CTLSGGDSSERADGDTFLSVTDSDSDLDV) are disordered.

It belongs to the SIX/Sine oculis homeobox family. In terms of assembly, interacts with GMNN.

It localises to the nucleus. Its function is as follows. Transcriptional regulator which can act as both a transcriptional repressor and activator by binding a ATTA homeodomain core recognition sequence on these target genes. During forebrain development represses WNT1 expression allowing zona limitans intrathalamica formation and thereby ensuring proper anterio-posterior patterning of the diencephalon and formation of the rostral diencephalon. Acts as a direct upstream activator of SHH expression in the rostral diencephalon ventral midline and that in turn SHH maintains its expression. In addition, Six3 activity is required for the formation of the telencephalon. During postnatal stages of brain development is necessary for ependymal cell maturation by promoting the maturation of radial glia into ependymal cells through regulation of neuroblast proliferation and migration. Acts on the proliferation and differentiation of neural progenitor cells through activating transcription of CCND1 and CCND2. During early lens formation plays a role in lens induction and specification by activating directly PAX6 in the presumptive lens ectoderm. In turn PAX6 activates SIX3 resulting in activation of PDGFRA and CCND1 promoting cell proliferation. Also is required for the neuroretina development by directly suppressing WNT8B expression in the anterior neural plate territory. Its action during retina development and lens morphogenesis is AES and TLE4-dependent manner. Furthermore, during eye development regulates several genes expression. Before and during early lens development represses the CRYGF promoter by binding a SIX repressor element. Directly activates RHO transcription, or cooperates with CRX or NRL. Six3 also functions in the formation of the proximodistal axis of the optic cup, and promotes the formation of optic vesicles-like structures. During pituitary development, acts in parallel or alternatively with HESX1 to control cell proliferation through Wnt/beta-catenin pathway. Plays a role in eye development by suppressing WNT1 expression and in dorsal-ventral patterning by repressing BMP signaling pathway. The sequence is that of Homeobox protein SIX3 (six3) from Oryzias latipes (Japanese rice fish).